Here is a 176-residue protein sequence, read N- to C-terminus: Nudix hydrolase 18, mitochondrial (176 aa).

Residues 1–21 (MVCLVSRTGRQSQRYNKGRRQ) constitute a mitochondrion transit peptide. A Nudix hydrolase domain is found at 22-153 (VVGCIPYRLK…WMKEALDVLV (132 aa)). Residues 60–81 (GGWELDESVEEAASRESLEEAG) carry the Nudix box motif. Positions 75 and 79 each coordinate Mg(2+).

It belongs to the Nudix hydrolase family. Requires Mg(2+) as cofactor. The cofactor is Mn(2+). As to expression, expressed in roots, stems and inflorescences.

The protein localises to the mitochondrion. In terms of biological role, probably mediates the hydrolysis of some nucleoside diphosphate derivatives. This Arabidopsis thaliana (Mouse-ear cress) protein is Nudix hydrolase 18, mitochondrial (NUDT18).